The primary structure comprises 144 residues: Large ribosomal subunit protein uL15 (144 aa).

The interval 1–49 (MKLNTLSPAAGAKSAAKRVGRGIGSGLGKTAGRGHKGQKSRSGGGVRVG) is disordered. The segment covering 21–31 (RGIGSGLGKTA) has biased composition (gly residues).

It belongs to the universal ribosomal protein uL15 family. In terms of assembly, part of the 50S ribosomal subunit.

Its function is as follows. Binds to the 23S rRNA. The polypeptide is Large ribosomal subunit protein uL15 (Shewanella loihica (strain ATCC BAA-1088 / PV-4)).